The primary structure comprises 38 residues: MKVRTSVKTLCRNCKIVKRHGIIRVICSSDPKHKQRQG.

It belongs to the bacterial ribosomal protein bL36 family.

This is Large ribosomal subunit protein bL36 from Baumannia cicadellinicola subsp. Homalodisca coagulata.